We begin with the raw amino-acid sequence, 878 residues long: Microtubule-associated protein homolog maph-1.1 (878 aa).

2 disordered regions span residues 224–425 (ALSD…AQAT) and 456–518 (EIPP…PVVP). Composition is skewed to low complexity over residues 241 to 268 (PSAR…APRA), 278 to 293 (SRPT…PRTA), 310 to 321 (APTRAPVPARSA), and 328 to 339 (APAKPAANTAKA). 2 stretches are compositionally biased toward basic and acidic residues: residues 416 to 425 (PPRHEVAQAT) and 480 to 496 (EEDK…KPDP).

This sequence belongs to the MAP1A/MAP1B/MAP1S family. As to quaternary structure, interacts with dlg-1.

The protein localises to the cell projection. It localises to the dendrite. It is found in the perikaryon. Its subcellular location is the axon. The protein resides in the cytoplasm. The protein localises to the cytoskeleton. The polypeptide is Microtubule-associated protein homolog maph-1.1 (Caenorhabditis elegans).